A 436-amino-acid chain; its full sequence is D-amino acid dehydrogenase (436 aa).

3-17 (IVVLGAGVVGVTSAY) provides a ligand contact to FAD.

The protein belongs to the DadA oxidoreductase family. The cofactor is FAD.

The catalysed reaction is a D-alpha-amino acid + A + H2O = a 2-oxocarboxylate + AH2 + NH4(+). The protein operates within amino-acid degradation; D-alanine degradation; NH(3) and pyruvate from D-alanine: step 1/1. Functionally, oxidative deamination of D-amino acids. This chain is D-amino acid dehydrogenase, found in Cereibacter sphaeroides (strain ATCC 17029 / ATH 2.4.9) (Rhodobacter sphaeroides).